Here is a 443-residue protein sequence, read N- to C-terminus: ATP-dependent protease ATPase subunit HslU (443 aa).

ATP contacts are provided by residues Ile-18, 60-65, Asp-256, Glu-321, and Arg-393; that span reads GVGKTE.

It belongs to the ClpX chaperone family. HslU subfamily. In terms of assembly, a double ring-shaped homohexamer of HslV is capped on each side by a ring-shaped HslU homohexamer. The assembly of the HslU/HslV complex is dependent on binding of ATP.

It is found in the cytoplasm. In terms of biological role, ATPase subunit of a proteasome-like degradation complex; this subunit has chaperone activity. The binding of ATP and its subsequent hydrolysis by HslU are essential for unfolding of protein substrates subsequently hydrolyzed by HslV. HslU recognizes the N-terminal part of its protein substrates and unfolds these before they are guided to HslV for hydrolysis. This is ATP-dependent protease ATPase subunit HslU from Yersinia pestis bv. Antiqua (strain Antiqua).